The chain runs to 2153 residues: Genome polyprotein (2153 aa).

Residue G2 is the site of N-myristoyl glycine; by host attachment. The Cytoplasmic segment spans residues 2 to 1466 (GAQVSRQNVG…DLNIANSIIT (1465 aa)). The segment at 565–582 (PITQNPVERYVDEVLNEV) is amphipathic alpha-helix. Active-site for protease 2A activity residues include H871 and D888. Residues C905 and C907 each coordinate Zn(2+). C959 (for protease 2A activity) is an active-site residue. Positions 965 and 967 each coordinate Zn(2+). The interval 1091–1160 (SDSWLKKFTE…NLRAADTNTQ (70 aa)) is membrane-binding. Residues 1091–1224 (SDSWLKKFTE…PPGTGKSITT (134 aa)) form an oligomerization region. Residues 1112–1116 (GNKIS) form an RNA-binding region. One can recognise an SF3 helicase domain in the interval 1186 to 1346 (KRIKVLYHKC…YKDNQGKLDV (161 aa)). Zn(2+) is bound by residues C1353, C1364, and C1369. The C4-type; degenerate zinc finger occupies 1353-1369 (CDVDSKIGNAKCCPFVC). The tract at residues 1396-1403 (EDKRRRQV) is RNA-binding. The oligomerization stretch occupies residues 1407-1412 (MSAIFQ). The stretch at 1467–1482 (IIANIISIAGIIYIIY) is an intramembrane region. Over 1483-2153 (KLFCSLQGPY…LLRHEWYEKF (671 aa)) the chain is Cytoplasmic. Position 1492 is an O-(5'-phospho-RNA)-tyrosine (Y1492). One can recognise a Peptidase C3 domain in the interval 1511 to 1689 (GPEEEFGMSI…FSSMLLRSYF (179 aa)). Residues H1550, E1581, and C1657 each act as for protease 3C activity in the active site. Residues 1921–2034 (DCIMAFDYTN…SYKYKLDMEA (114 aa)) enclose the RdRp catalytic domain. D1927 and D2020 together coordinate Mg(2+).

It belongs to the picornaviruses polyprotein family. In terms of assembly, interacts with capsid protein VP1 and capsid protein VP3 to form heterotrimeric protomers. As to quaternary structure, interacts with capsid protein VP0, and capsid protein VP3 to form heterotrimeric protomers. Five protomers subsequently associate to form pentamers which serve as building blocks for the capsid. Interacts with capsid protein VP2, capsid protein VP3 and capsid protein VP4 following cleavage of capsid protein VP0. Interacts with capsid protein VP1 and capsid protein VP3 in the mature capsid. In terms of assembly, interacts with capsid protein VP0 and capsid protein VP1 to form heterotrimeric protomers. Five protomers subsequently associate to form pentamers which serve as building blocks for the capsid. Interacts with capsid protein VP4 in the mature capsid. Interacts with protein 2C; this interaction may be important for virion morphogenesis. As to quaternary structure, interacts with capsid protein VP1 and capsid protein VP3. Homodimer. In terms of assembly, homohexamer; forms a hexameric ring structure with 6-fold symmetry characteristic of AAA+ ATPases. Interacts (via N-terminus) with host RTN3 (via reticulon domain); this interaction is important for viral replication. Interacts with capsid protein VP3; this interaction may be important for virion morphogenesis. As to quaternary structure, interacts with protein 3CD. Homodimer. Interacts with host GBF1. Interacts (via GOLD domain) with host ACBD3 (via GOLD domain); this interaction allows the formation of a viral protein 3A/ACBD3 heterotetramer with a 2:2 stoichiometry, which will stimulate the recruitment of host PI4KB in order to synthesize PI4P at the viral RNA replication sites. In terms of assembly, interacts with RNA-directed RNA polymerase. As to quaternary structure, interacts with protein 3AB and with RNA-directed RNA polymerase. Interacts with Viral protein genome-linked and with protein 3CD. Mg(2+) serves as cofactor. In terms of processing, specific enzymatic cleavages in vivo by the viral proteases yield processing intermediates and the mature proteins. Post-translationally, myristoylation is required for the formation of pentamers during virus assembly. Further assembly of 12 pentamers and a molecule of genomic RNA generates the provirion. During virion maturation, immature virions are rendered infectious following cleavage of VP0 into VP4 and VP2. This maturation seems to be an autocatalytic event triggered by the presence of RNA in the capsid and it is followed by a conformational change infectious virion. In terms of processing, myristoylation is required during RNA encapsidation and formation of the mature virus particle. Post-translationally, VPg is uridylylated by the polymerase into VPg-pUpU. This acts as a nucleotide-peptide primer for the genomic RNA replication.

The protein localises to the virion. Its subcellular location is the host cytoplasm. It localises to the host cytoplasmic vesicle membrane. The protein resides in the host nucleus. It catalyses the reaction a ribonucleoside 5'-triphosphate + H2O = a ribonucleoside 5'-diphosphate + phosphate + H(+). The enzyme catalyses Selective cleavage of Tyr-|-Gly bond in the picornavirus polyprotein.. It carries out the reaction RNA(n) + a ribonucleoside 5'-triphosphate = RNA(n+1) + diphosphate. The catalysed reaction is Selective cleavage of Gln-|-Gly bond in the poliovirus polyprotein. In other picornavirus reactions Glu may be substituted for Gln, and Ser or Thr for Gly.. Its activity is regulated as follows. Replication or transcription is subject to high level of random mutations by the nucleotide analog ribavirin. In terms of biological role, forms an icosahedral capsid of pseudo T=3 symmetry with capsid proteins VP2 and VP3. The capsid is 300 Angstroms in diameter, composed of 60 copies of each capsid protein and enclosing the viral positive strand RNA genome. Capsid protein VP1 mainly forms the vertices of the capsid. Capsid protein VP1 interacts with host cell receptor to provide virion attachment to target host cells. This attachment induces virion internalization. Tyrosine kinases are probably involved in the entry process. After binding to its receptor, the capsid undergoes conformational changes. Capsid protein VP1 N-terminus (that contains an amphipathic alpha-helix) and capsid protein VP4 are externalized. Together, they shape a pore in the host membrane through which viral genome is translocated to host cell cytoplasm. Its function is as follows. Forms an icosahedral capsid of pseudo T=3 symmetry with capsid proteins VP2 and VP3. The capsid is 300 Angstroms in diameter, composed of 60 copies of each capsid protein and enclosing the viral positive strand RNA genome. Functionally, lies on the inner surface of the capsid shell. After binding to the host receptor, the capsid undergoes conformational changes. Capsid protein VP4 is released, Capsid protein VP1 N-terminus is externalized, and together, they shape a pore in the host membrane through which the viral genome is translocated into the host cell cytoplasm. Component of immature procapsids, which is cleaved into capsid proteins VP4 and VP2 after maturation. Allows the capsid to remain inactive before the maturation step. In terms of biological role, cysteine protease that cleaves viral polyprotein and specific host proteins. It is responsible for the autocatalytic cleavage between the P1 and P2 regions, which is the first cleavage occurring in the polyprotein. Also cleaves the host translation initiation factor EIF4G1, in order to shut down the capped cellular mRNA translation. Inhibits the host nucleus-cytoplasm protein and RNA trafficking by cleaving host members of the nuclear pores. Counteracts stress granule formation probably by antagonizing its assembly or promoting its dissassembly. Its function is as follows. Plays an essential role in the virus replication cycle by acting as a viroporin. Creates a pore in the host endoplasmic reticulum and as a consequence releases Ca2+ in the cytoplasm of infected cell. In turn, high levels of cytoplasmic calcium may trigger membrane trafficking and transport of viral ER-associated proteins to viroplasms, sites of viral genome replication. Functionally, induces and associates with structural rearrangements of intracellular membranes. Displays RNA-binding, nucleotide binding and NTPase activities. May play a role in virion morphogenesis and viral RNA encapsidation by interacting with the capsid protein VP3. Localizes the viral replication complex to the surface of membranous vesicles. It inhibits host cell endoplasmic reticulum-to-Golgi apparatus transport and causes the disassembly of the Golgi complex, possibly through GBF1 interaction. This would result in depletion of MHC, trail receptors and IFN receptors at the host cell surface. Plays an essential role in viral RNA replication by recruiting ACBD3 and PI4KB at the viral replication sites, thereby allowing the formation of the rearranged membranous structures where viral replication takes place. In terms of biological role, acts as a primer for viral RNA replication and remains covalently bound to viral genomic RNA. VPg is uridylylated prior to priming replication into VPg-pUpU. The oriI viral genomic sequence may act as a template for this. The VPg-pUpU is then used as primer on the genomic RNA poly(A) by the RNA-dependent RNA polymerase to replicate the viral genome. During genome replication, the VPg-RNA linkage is removed by the host TDP2, thereby accelerating replication. During the late stage of the replication cycle, host TDP2 is excluded from sites of viral RNA synthesis and encapsidation, allowing for the generation of progeny virions. Its function is as follows. Involved in the viral replication complex and viral polypeptide maturation. It exhibits protease activity with a specificity and catalytic efficiency that is different from protease 3C. Protein 3CD lacks polymerase activity. Protein 3CD binds to the 5'UTR of the viral genome. Functionally, major viral protease that mediates proteolytic processing of the polyprotein. Cleaves host EIF5B, contributing to host translation shutoff. Also cleaves host PABPC1, contributing to host translation shutoff. Cleaves host NLRP1, triggers host N-glycine-mediated degradation of the autoinhibitory NLRP1 N-terminal fragment. Replicates the viral genomic RNA on the surface of intracellular membranes. May form linear arrays of subunits that propagate along a strong head-to-tail interaction called interface-I. Covalently attaches UMP to a tyrosine of VPg, which is used to prime RNA synthesis. The positive stranded RNA genome is first replicated at virus induced membranous vesicles, creating a dsRNA genomic replication form. This dsRNA is then used as template to synthesize positive stranded RNA genomes. ss(+)RNA genomes are either translated, replicated or encapsidated. The chain is Genome polyprotein from Human rhinovirus 16 (HRV-16).